A 283-amino-acid polypeptide reads, in one-letter code: Transcription factor bHLH104 (283 aa).

The disordered stretch occupies residues 96-134 (VEINSGSSGGAVKEEQEHLDDDCSRKRARTGSCSRGGGT). Residues 107–120 (VKEEQEHLDDDCSR) are compositionally biased toward basic and acidic residues. The 52-residue stretch at 130–181 (RGGGTKACRERLRREKLNERFMDLSSVLEPGRTPKTDKPAILDDAIRILNQL) folds into the bHLH domain.

As to quaternary structure, homodimer. Interacts with BTS and BHLH47/PYE.

It is found in the nucleus. The protein is Transcription factor bHLH104 (BHLH104) of Arabidopsis thaliana (Mouse-ear cress).